The following is a 397-amino-acid chain: Mitochondrial inner membrane magnesium transporter LPE10 (397 aa).

The N-terminal 37 residues, 1-37 (MLLVNRAITLNLVKRCCWRSTMFMTPKRFLGTSEEES), are a transit peptide targeting the mitochondrion. A helical transmembrane segment spans residues 316-336 (LMLLGIRFSIGMLSLGGPIFI). The short motif at 340–343 (YGMN) is the YGMN element. A helical transmembrane segment spans residues 354–374 (GFIAASAIGMISLGALYFYSI).

It belongs to the CorA metal ion transporter (MIT) (TC 1.A.35) family. Forms homooligomers. Interacts with MRS2.

It is found in the mitochondrion inner membrane. In terms of biological role, mitochondrial inner membrane magnesium transporter required for mitochondrial magnesium homeostasis. Modulates the conductance of the MRS2 channel. Involved in the splicing of mRNA group II introns in mitochondria by affecting mitochondrial magnesium concentrations, which are critical for group II intron splicing. The polypeptide is Mitochondrial inner membrane magnesium transporter LPE10 (LPE10) (Candida glabrata (strain ATCC 2001 / BCRC 20586 / JCM 3761 / NBRC 0622 / NRRL Y-65 / CBS 138) (Yeast)).